A 582-amino-acid polypeptide reads, in one-letter code: NAB transcription cofactor mab-10 (582 aa).

Low complexity predominate over residues 1 to 70; sequence MSSSSSSSLP…SSSSQRQSTS (70 aa). Disordered stretches follow at residues 1–84, 257–287, 333–365, and 516–582; these read MSSS…MPTP, SDQQSSSTSSVRSVLPSTSSNTSHPELPAGI, PPSSTSIQQPSTSFGRSSSITGQEKEGSSSPFL, and SRKR…LPES. An NCD1 region spans residues 83–161; the sequence is TPTTLSEWQL…EYSQDQTAFN (79 aa). Composition is skewed to low complexity over residues 257–276 and 333–345; these read SDQQSSSTSSVRSVLPSTSS and PPSSTSIQQPSTS. Residues 396 to 519 are NCD2; it reads LSTAQISRLA…GYNYAKSRKR (124 aa). The span at 573-582 shows a compositional bias: basic and acidic residues; the sequence is EKMKGELPES.

Belongs to the NAB family. As to quaternary structure, interacts with transcription factor lin-29 (via C-terminus).

Its subcellular location is the nucleus. In terms of biological role, transcriptional cofactor. Heterochronic protein, involved in timing of a subset of differentiation events during the larval-to-adult transition. Promotes hypodermal terminal differentiation, together with transcription factor lin-29, perhaps as part of a transcriptional complex. Involved in regulating molting by repressing the expression of nuclear hormone receptors nhr-23 and nhr-25 in the adult hypoderm, probably acting in concert with lin-29. In Caenorhabditis elegans, this protein is NAB transcription cofactor mab-10.